The chain runs to 134 residues: DNA-binding protein StpA (134 aa).

The segment at 73 to 94 (EELLGNSSAAAPRAGKKRQPRP) is disordered. The DNA-binding element occupies 112 to 117 (QGRTPK).

This sequence belongs to the histone-like protein H-NS family. As to quaternary structure, forms homodimers, can interact with H-NS. May interact with Hha and/or Cnu.

Its subcellular location is the cytoplasm. The protein resides in the nucleoid. In terms of biological role, a DNA-binding protein that acts in a fashion similar to H-NS, repressing gene transcription. A subset of H-NS/StpA-regulated genes require auxillary proteins for repression; these auxillary proteins (Hha and other similar proteins) may also modulate oligomerization of the H-NS/StpA complex. The protein is DNA-binding protein StpA (stpA) of Escherichia coli O157:H7.